A 351-amino-acid polypeptide reads, in one-letter code: Sulfate/thiosulfate import ATP-binding protein CysA (351 aa).

The region spanning 3–237 is the ABC transporter domain; that stretch reads ITVRNLHKRF…PRSAFVYEFL (235 aa). 35-42 is an ATP binding site; it reads GPSGCGKT.

The protein belongs to the ABC transporter superfamily. Sulfate/tungstate importer (TC 3.A.1.6) family. The complex is composed of two ATP-binding proteins (CysA), two transmembrane proteins (CysT and CysW) and a solute-binding protein (CysP).

The protein resides in the cell inner membrane. The enzyme catalyses sulfate(out) + ATP + H2O = sulfate(in) + ADP + phosphate + H(+). It catalyses the reaction thiosulfate(out) + ATP + H2O = thiosulfate(in) + ADP + phosphate + H(+). Functionally, part of the ABC transporter complex CysAWTP involved in sulfate/thiosulfate import. Responsible for energy coupling to the transport system. In Burkholderia pseudomallei (strain K96243), this protein is Sulfate/thiosulfate import ATP-binding protein CysA.